The chain runs to 193 residues: Corrinoid adenosyltransferase (193 aa).

ATP-binding positions include threonine 5–threonine 13, lysine 22, arginine 130–arginine 135, and asparagine 154.

It belongs to the Cob(I)alamin adenosyltransferase family. As to quaternary structure, homotrimer.

The protein localises to the cytoplasm. It catalyses the reaction 2 cob(II)yrinate a,c diamide + reduced [electron-transfer flavoprotein] + 2 ATP = 2 adenosylcob(III)yrinate a,c-diamide + 2 triphosphate + oxidized [electron-transfer flavoprotein] + 3 H(+). It carries out the reaction 2 cob(II)alamin + reduced [electron-transfer flavoprotein] + 2 ATP = 2 adenosylcob(III)alamin + 2 triphosphate + oxidized [electron-transfer flavoprotein] + 3 H(+). The protein operates within cofactor biosynthesis; adenosylcobalamin biosynthesis; adenosylcobalamin from cob(II)yrinate a,c-diamide: step 2/7. This chain is Corrinoid adenosyltransferase (yvqK), found in Bacillus subtilis (strain 168).